Consider the following 527-residue polypeptide: Flagellar radial spoke protein 5 (527 aa).

Residues 1 to 22 (MSEPGEEPVAAPAGPAPDPVLN) form a disordered region. Positions 101 to 153 (RKWNELTIQAKQLEQEVAGLKGPDAEAKQAELENVKVQIADAEAAVAEVKQSF) form a coiled coil. 2 positions are modified to asymmetric dimethylarginine: R191 and R366.

The protein belongs to the aldo/keto reductase family. Post-translationally, asymmetrically dimethylated at Arg-191 and Arg-366 during flagellum resorption. Probably methylated by PRMT1.

It localises to the cytoplasm. The protein localises to the cytoskeleton. It is found in the flagellum axoneme. Its function is as follows. Flagellar radial spokes contribute to the regulation of dynein arm activity and thus the pattern of flagellar bending. They consist of a thin stalk, which is attached to the a subfiber of the outer doublet microtubule, and a bulbous head, which is attached to the stalk and appears to interact with the projections from the central pair of microtubules. This Chlamydomonas reinhardtii (Chlamydomonas smithii) protein is Flagellar radial spoke protein 5.